We begin with the raw amino-acid sequence, 105 residues long: Nitrogen fixation nifHD region glnB-like protein 1 (105 aa).

It belongs to the P(II) protein family.

Functionally, could be involved in the regulation of nitrogen fixation. The polypeptide is Nitrogen fixation nifHD region glnB-like protein 1 (glnBI) (Methanococcus maripaludis (strain DSM 14266 / JCM 13030 / NBRC 101832 / S2 / LL)).